A 327-amino-acid polypeptide reads, in one-letter code: Glycerol-3-phosphate acyltransferase (327 aa).

A run of 5 helical transmembrane segments spans residues 3 to 23 (SLLWLAVAYVMGSIPFGLLFA), 52 to 72 (VGVLTLVCDALKGAIPVAVAL), 78 to 98 (TVFHSLTALAALLGHLYSCFL), 112 to 132 (VFLPLAFWPLVLSGIACLAVI), and 152 to 172 (MLLLGGHWKLVPLALVVMVLV). Disordered regions lie at residues 184–212 (SRGEEKPWQKKHHDAAQGTDAGAAPEAAA) and 233–327 (PSTE…SSGQ). The segment covering 199–212 (AQGTDAGAAPEAAA) has biased composition (low complexity). Residues 237 to 246 (AAPSQETSDA) show a composition bias toward polar residues. Basic and acidic residues predominate over residues 259–271 (EGDKRENEEHDNA).

The protein belongs to the PlsY family. As to quaternary structure, probably interacts with PlsX.

It is found in the cell inner membrane. The enzyme catalyses an acyl phosphate + sn-glycerol 3-phosphate = a 1-acyl-sn-glycero-3-phosphate + phosphate. Its pathway is lipid metabolism; phospholipid metabolism. Its function is as follows. Catalyzes the transfer of an acyl group from acyl-phosphate (acyl-PO(4)) to glycerol-3-phosphate (G3P) to form lysophosphatidic acid (LPA). This enzyme utilizes acyl-phosphate as fatty acyl donor, but not acyl-CoA or acyl-ACP. This chain is Glycerol-3-phosphate acyltransferase, found in Nitratidesulfovibrio vulgaris (strain ATCC 29579 / DSM 644 / CCUG 34227 / NCIMB 8303 / VKM B-1760 / Hildenborough) (Desulfovibrio vulgaris).